The primary structure comprises 118 residues: Small ribosomal subunit protein uS13 (118 aa).

The segment at 94 to 118 (SLPVRGQRTKTNARTRKGPRKPIKK) is disordered.

It belongs to the universal ribosomal protein uS13 family. In terms of assembly, part of the 30S ribosomal subunit. Forms a loose heterodimer with protein S19. Forms two bridges to the 50S subunit in the 70S ribosome.

Its function is as follows. Located at the top of the head of the 30S subunit, it contacts several helices of the 16S rRNA. In the 70S ribosome it contacts the 23S rRNA (bridge B1a) and protein L5 of the 50S subunit (bridge B1b), connecting the 2 subunits; these bridges are implicated in subunit movement. Contacts the tRNAs in the A and P-sites. This is Small ribosomal subunit protein uS13 from Haemophilus influenzae (strain 86-028NP).